A 446-amino-acid chain; its full sequence is Tetratricopeptide repeat protein 23 (446 aa).

TPR repeat units follow at residues 45-78 (LRLS…TRIC), 137-170 (VELF…SKEM), 186-219 (ARIK…TEIS), 310-347 (TAKF…KVAV), and 356-389 (AETY…QTLL). Residues 410 to 446 (APEVPARPRPSPGAKAAFCAGGRPYSVPGRTRPSAAD) form a disordered region.

Associated with the EvC complex composed of EFCAB7, IQCE, EVC2 and EVC.

It localises to the cell projection. The protein localises to the cilium. In terms of biological role, participates positively in the ciliary Hedgehog (Hh) signaling. The polypeptide is Tetratricopeptide repeat protein 23 (TTC23) (Bos taurus (Bovine)).